We begin with the raw amino-acid sequence, 773 residues long: FT-interacting protein 3 (773 aa).

Over residues 1–16 (MQRPPPEDFSLKETRP) the composition is skewed to basic and acidic residues. The segment at 1–24 (MQRPPPEDFSLKETRPHLGGGKLS) is disordered. 3 C2 domains span residues 22–142 (KLSG…PQWY), 181–305 (VSGT…SRWY), and 345–471 (YSSD…THSY). Aspartate 55, aspartate 61, aspartate 108, aspartate 110, and aspartate 115 together coordinate Ca(2+). 3 helical membrane-spanning segments follow: residues 574 to 594 (IMGVLSGLIAVGKWFEQICNW), 608 to 628 (IILVLYPELILPTIFLYLFLI), and 716 to 736 (LFVLFCLIAAVILYVTPFQVV).

It belongs to the MCTP family. Interacts with and regulates subcellular localization and trafficking of STM. It depends on Ca(2+) as a cofactor. In terms of tissue distribution, accumulates in vascular tissues, leaf primordia and flowers. Highly expressed in roots meristems and in both vegetative and inflorescence shoot apical meristems (SAMs).

The protein localises to the endoplasmic reticulum membrane. It is found in the cytoplasm. It localises to the vesicle. Its subcellular location is the cell membrane. The protein resides in the endosome membrane. The protein localises to the golgi apparatus membrane. Its function is as follows. Required for proliferation and differentiation of shoot stem cells in the shoot apical meristem (SAM), thus determining the appropriate balance between the maintenance of shoot stem cells and their differentiation into other aboveground plant parts via the control of subcellular localization and intercellular trafficking of STM in the shoot apex. Prevents intracellular trafficking of STM to the plasma membrane in cells in the peripheral shoot meristem region thus facilitating STM recycling to the nucleus to maintain stem cells. May function as a signaling molecule by regulating the trafficking of other regulators. The polypeptide is FT-interacting protein 3 (Arabidopsis thaliana (Mouse-ear cress)).